A 292-amino-acid polypeptide reads, in one-letter code: S-methyl-5'-thioadenosine phosphorylase (292 aa).

Residues serine 11, 53–54 (RH), and 86–87 (SA) contribute to the phosphate site. Methionine 184 serves as a coordination point for substrate. Residue threonine 185 participates in phosphate binding. Residue 208–210 (DYD) coordinates substrate.

This sequence belongs to the PNP/MTAP phosphorylase family. MTAP subfamily. As to quaternary structure, homohexamer. Dimer of a homotrimer.

It catalyses the reaction S-methyl-5'-thioadenosine + phosphate = 5-(methylsulfanyl)-alpha-D-ribose 1-phosphate + adenine. The protein operates within amino-acid biosynthesis; L-methionine biosynthesis via salvage pathway; S-methyl-5-thio-alpha-D-ribose 1-phosphate from S-methyl-5'-thioadenosine (phosphorylase route): step 1/1. Functionally, catalyzes the reversible phosphorylation of S-methyl-5'-thioadenosine (MTA) to adenine and 5-methylthioribose-1-phosphate. Involved in the breakdown of MTA, a major by-product of polyamine biosynthesis. Responsible for the first step in the methionine salvage pathway after MTA has been generated from S-adenosylmethionine. Has broad substrate specificity with 6-aminopurine nucleosides as preferred substrates. This is S-methyl-5'-thioadenosine phosphorylase from Koribacter versatilis (strain Ellin345).